The primary structure comprises 131 residues: Fluoride-specific ion channel FluC (131 aa).

4 consecutive transmembrane segments (helical) span residues 4–24 (LWIM…TGFV), 30–50 (GIFP…IGFF), 68–88 (LFVM…SLQT), and 104–124 (IALS…VAVA). Na(+)-binding residues include Gly76 and Thr79.

This sequence belongs to the fluoride channel Fluc/FEX (TC 1.A.43) family.

The protein localises to the cell inner membrane. It catalyses the reaction fluoride(in) = fluoride(out). Na(+) is not transported, but it plays an essential structural role and its presence is essential for fluoride channel function. Fluoride-specific ion channel. Important for reducing fluoride concentration in the cell, thus reducing its toxicity. This chain is Fluoride-specific ion channel FluC, found in Methylocella silvestris (strain DSM 15510 / CIP 108128 / LMG 27833 / NCIMB 13906 / BL2).